Here is a 239-residue protein sequence, read N- to C-terminus: Orotidine 5'-phosphate decarboxylase (239 aa).

Substrate is bound by residues Asp-15, Lys-36, Asp-63 to Thr-72, Thr-127, Arg-189, Gln-198, Gly-218, and Arg-219. Residue Lys-65 is the Proton donor of the active site.

It belongs to the OMP decarboxylase family. Type 1 subfamily. As to quaternary structure, homodimer.

It catalyses the reaction orotidine 5'-phosphate + H(+) = UMP + CO2. Its pathway is pyrimidine metabolism; UMP biosynthesis via de novo pathway; UMP from orotate: step 2/2. In terms of biological role, catalyzes the decarboxylation of orotidine 5'-monophosphate (OMP) to uridine 5'-monophosphate (UMP). The polypeptide is Orotidine 5'-phosphate decarboxylase (Prochlorococcus marinus (strain MIT 9515)).